The sequence spans 246 residues: uncharacterized protein (246 aa).

4 consecutive transmembrane segments (helical) span residues 32-52 (TLFF…VGFI), 69-89 (IIAI…MCPF), 121-141 (IYFK…GVKI), and 146-166 (LAYL…MFFC). 4Fe-4S ferredoxin-type domains lie at 185-213 (FKLK…ITEK) and 210-239 (ITEK…FSAF). [4Fe-4S] cluster contacts are provided by Cys194, Cys197, Cys200, Cys204, Cys219, Cys222, Cys225, and Cys229.

The protein resides in the cell membrane. This is an uncharacterized protein from Methanocaldococcus jannaschii (strain ATCC 43067 / DSM 2661 / JAL-1 / JCM 10045 / NBRC 100440) (Methanococcus jannaschii).